The sequence spans 148 residues: UPF0756 membrane protein YeaL (148 aa).

4 helical membrane-spanning segments follow: residues 14–34 (ALGFISHNTTVAVSILVLIIV), 51–71 (LSIGIIILTIGIMAPIASGTL), 86–106 (LVAIAVGVIVSWLGGRGVTLM), and 121–141 (VLGVALFRGVPVGPLIAAGLV).

Belongs to the UPF0756 family.

It localises to the cell membrane. This is UPF0756 membrane protein YeaL from Escherichia coli O127:H6 (strain E2348/69 / EPEC).